Here is a 508-residue protein sequence, read N- to C-terminus: Photosystem II CP47 reaction center protein (508 aa).

6 consecutive transmembrane segments (helical) span residues 21–36, 101–115, 140–156, 203–218, 237–252, and 457–472; these read SVHI…WAGS, IVFS…IWHW, GIHL…FGAF, IAAG…FHLS, VLSS…AFVV, and TFAL…HGAR.

It belongs to the PsbB/PsbC family. PsbB subfamily. PSII is composed of 1 copy each of membrane proteins PsbA, PsbB, PsbC, PsbD, PsbE, PsbF, PsbH, PsbI, PsbJ, PsbK, PsbL, PsbM, PsbT, PsbX, PsbY, PsbZ, Psb30/Ycf12, at least 3 peripheral proteins of the oxygen-evolving complex and a large number of cofactors. It forms dimeric complexes. It depends on Binds multiple chlorophylls. PSII binds additional chlorophylls, carotenoids and specific lipids. as a cofactor.

Its subcellular location is the plastid. It is found in the chloroplast thylakoid membrane. One of the components of the core complex of photosystem II (PSII). It binds chlorophyll and helps catalyze the primary light-induced photochemical processes of PSII. PSII is a light-driven water:plastoquinone oxidoreductase, using light energy to abstract electrons from H(2)O, generating O(2) and a proton gradient subsequently used for ATP formation. The protein is Photosystem II CP47 reaction center protein of Chloranthus spicatus (Chulantree).